The primary structure comprises 212 residues: Ribosome maturation factor RimM (212 aa).

The PRC barrel domain maps to 105 to 181; the sequence is EEEFYYADLI…IDSITAGLDN (77 aa). The segment at 181-212 is disordered; the sequence is NAELSGEEDEAEGPESARGSRPRGPKSAGEPR.

This sequence belongs to the RimM family. As to quaternary structure, binds ribosomal protein uS19.

The protein localises to the cytoplasm. Its function is as follows. An accessory protein needed during the final step in the assembly of 30S ribosomal subunit, possibly for assembly of the head region. Essential for efficient processing of 16S rRNA. May be needed both before and after RbfA during the maturation of 16S rRNA. It has affinity for free ribosomal 30S subunits but not for 70S ribosomes. The sequence is that of Ribosome maturation factor RimM from Chelativorans sp. (strain BNC1).